The following is a 184-amino-acid chain: 3-hydroxydecanoyl-[acyl-carrier-protein] dehydratase (184 aa).

His-77 is an active-site residue.

It belongs to the thioester dehydratase family. FabA subfamily. Homodimer.

The protein localises to the cytoplasm. The enzyme catalyses a (3R)-hydroxyacyl-[ACP] = a (2E)-enoyl-[ACP] + H2O. It catalyses the reaction (3R)-hydroxydecanoyl-[ACP] = (2E)-decenoyl-[ACP] + H2O. It carries out the reaction (2E)-decenoyl-[ACP] = (3Z)-decenoyl-[ACP]. The protein operates within lipid metabolism; fatty acid biosynthesis. In terms of biological role, necessary for the introduction of cis unsaturation into fatty acids. Catalyzes the dehydration of (3R)-3-hydroxydecanoyl-ACP to E-(2)-decenoyl-ACP and then its isomerization to Z-(3)-decenoyl-ACP. Can catalyze the dehydratase reaction for beta-hydroxyacyl-ACPs with saturated chain lengths up to 16:0, being most active on intermediate chain length. The chain is 3-hydroxydecanoyl-[acyl-carrier-protein] dehydratase from Hyphomonas neptunium (strain ATCC 15444).